Consider the following 95-residue polypeptide: Small ribosomal subunit protein bS18 (95 aa).

It belongs to the bacterial ribosomal protein bS18 family. Part of the 30S ribosomal subunit. Forms a tight heterodimer with protein bS6.

Binds as a heterodimer with protein bS6 to the central domain of the 16S rRNA, where it helps stabilize the platform of the 30S subunit. The protein is Small ribosomal subunit protein bS18 of Rickettsia peacockii (strain Rustic).